Here is a 357-residue protein sequence, read N- to C-terminus: Guanine nucleotide-binding protein alpha-1 subunit (357 aa).

Glycine 2 is lipidated: N-myristoyl glycine. The S-palmitoyl cysteine moiety is linked to residue cysteine 4. The 326-residue stretch at 32–357 (NVIKLLLLGA…SSKLKGCGLF (326 aa)) folds into the G-alpha domain. Residues 35–48 (KLLLLGAGESGKST) are G1 motif. Residues glutamate 43, serine 44, glycine 45, lysine 46, serine 47, threonine 48, aspartate 151, leucine 176, threonine 182, glycine 204, asparagine 270, lysine 271, aspartate 273, and alanine 329 each coordinate GTP. Serine 47 provides a ligand contact to Mg(2+). Positions 174–182 (DILHTRVPT) are G2 motif. Mg(2+) is bound at residue threonine 182. The tract at residues 197-206 (FRVFDVGGQR) is G3 motif. Positions 266–273 (ILFLNKVD) are G4 motif. The segment at 327 to 332 (TCATDT) is G5 motif.

The protein belongs to the G-alpha family. G(q) subfamily. In terms of assembly, g proteins are composed of 3 units; alpha, beta and gamma. The alpha chain contains the guanine nucleotide binding site. Requires Mg(2+) as cofactor.

Its function is as follows. Guanine nucleotide-binding proteins (G proteins) are involved as modulators or transducers in various transmembrane signaling systems. The sequence is that of Guanine nucleotide-binding protein alpha-1 subunit (gpa-1) from Caenorhabditis briggsae.